A 1087-amino-acid polypeptide reads, in one-letter code: Error-prone DNA polymerase 3 (1087 aa).

Residues 1040–1064 (AGRGDEFAHGSPGSSDTRDKSKPVV) are disordered.

This sequence belongs to the DNA polymerase type-C family. DnaE2 subfamily.

The protein localises to the cytoplasm. It catalyses the reaction DNA(n) + a 2'-deoxyribonucleoside 5'-triphosphate = DNA(n+1) + diphosphate. Its function is as follows. DNA polymerase involved in damage-induced mutagenesis and translesion synthesis (TLS). It is not the major replicative DNA polymerase. This chain is Error-prone DNA polymerase 3, found in Agrobacterium fabrum (strain C58 / ATCC 33970) (Agrobacterium tumefaciens (strain C58)).